The sequence spans 174 residues: Cytidylate kinase (174 aa).

Position 7 to 15 (7 to 15 (GLPGTGTTT)) interacts with ATP.

The protein belongs to the cytidylate kinase family. Type 2 subfamily.

It localises to the cytoplasm. It catalyses the reaction CMP + ATP = CDP + ADP. It carries out the reaction dCMP + ATP = dCDP + ADP. The chain is Cytidylate kinase from Methanococcus vannielii (strain ATCC 35089 / DSM 1224 / JCM 13029 / OCM 148 / SB).